A 211-amino-acid chain; its full sequence is Mitotic spindle assembly checkpoint protein MAD2B (211 aa).

In terms of domain architecture, HORMA spans 13-203; sequence QVVADVLSEF…SDILKMQLYV (191 aa). A mediates interaction with REV1 and REV3L and homodimerization region spans residues 21-155; that stretch reads EFLEVAVHLI…FTVLVHTREA (135 aa).

Homooligomer. Heterodimer with REV3L. This dimer forms the minimal DNA polymerase zeta complex (Pol-zeta2), with REV3L bearing DNA polymerase catalytic activity, although its activity is very low in this context. Component of the tetrameric Pol-zeta complex (Pol-zeta4), which consists of REV3L, MAD2L2, POLD2 and POLD3; Pol-zeta4 is the fully active form of DNA polymerase zeta. Component of the shieldin complex, consisting of SHLD1, SHLD2, SHLD3 and MAD2L2/REV7. Within the complex, SHLD2 forms a scaffold which interacts with a SHLD3-MAD2L2 subcomplex via its N-terminus, and with SHLD1 via its C-terminus. Interacts with REV1. Interacts with ADAM9. Interacts with CHAMP1. Interacts with FZR1 (in complex with the anaphase promoting complex APC). May interact with CDC20. Interacts with RAN. Interacts with ELK1; the interaction is direct and recruits MAD2L2 to ELK1-specific promoters. May interact with the JNK kinases MAPK8 and/or MAPK9 to stimulate ELK1 phosphorylation and transcriptional activity upon DNA damage. Interacts with TCF7L2; prevents its binding to promoters and negatively modulates its transcriptional activity. Interacts with YY1AP1. Interacts with PRCC; the interaction is direct. Interacts with POGZ. Interacts with ASTE1.

The protein localises to the nucleus. Its subcellular location is the cytoplasm. It localises to the cytoskeleton. It is found in the spindle. In terms of biological role, adapter protein able to interact with different proteins and involved in different biological processes. Mediates the interaction between the error-prone DNA polymerase zeta catalytic subunit REV3L and the inserter polymerase REV1, thereby mediating the second polymerase switching in translesion DNA synthesis. Translesion DNA synthesis releases the replication blockade of replicative polymerases, stalled in presence of DNA lesions. Component of the shieldin complex, which plays an important role in repair of DNA double-stranded breaks (DSBs). During G1 and S phase of the cell cycle, the complex functions downstream of TP53BP1 to promote non-homologous end joining (NHEJ) and suppress DNA end resection. Mediates various NHEJ-dependent processes including immunoglobulin class-switch recombination, and fusion of unprotected telomeres. May also regulate another aspect of cellular response to DNA damage through regulation of the JNK-mediated phosphorylation and activation of the transcriptional activator ELK1. Inhibits the FZR1- and probably CDC20-mediated activation of the anaphase promoting complex APC thereby regulating progression through the cell cycle. Regulates TCF7L2-mediated gene transcription and may play a role in epithelial-mesenchymal transdifferentiation. This is Mitotic spindle assembly checkpoint protein MAD2B (Mad2l2) from Rattus norvegicus (Rat).